We begin with the raw amino-acid sequence, 452 residues long: Phosphoglucosamine mutase (452 aa).

Ser109 acts as the Phosphoserine intermediate in catalysis. Mg(2+) contacts are provided by Ser109, Asp248, Asp250, and Asp252. Ser109 is modified (phosphoserine).

This sequence belongs to the phosphohexose mutase family. The cofactor is Mg(2+). In terms of processing, activated by phosphorylation.

It catalyses the reaction alpha-D-glucosamine 1-phosphate = D-glucosamine 6-phosphate. In terms of biological role, catalyzes the conversion of glucosamine-6-phosphate to glucosamine-1-phosphate. This chain is Phosphoglucosamine mutase, found in Erythrobacter litoralis (strain HTCC2594).